Consider the following 103-residue polypeptide: SOSS complex subunit C (103 aa).

This sequence belongs to the SOSS-C family. In terms of assembly, belongs to the multiprotein complex Integrator. Component of the SOSS complex, composed of SOSS-B (SOSS-B1/NABP2 or SOSS-B2/NABP1), SOSS-A/INTS3 and SOSS-C/INIP.

It is found in the nucleus. Its function is as follows. Component of the SOSS complex, a multiprotein complex that functions downstream of the MRN complex to promote DNA repair and G2/M checkpoint. The SOSS complex associates with single-stranded DNA at DNA lesions and influences diverse endpoints in the cellular DNA damage response including cell-cycle checkpoint activation, recombinational repair and maintenance of genomic stability. Required for efficient homologous recombination-dependent repair of double-strand breaks (DSBs). The chain is SOSS complex subunit C (INIP) from Gallus gallus (Chicken).